Reading from the N-terminus, the 535-residue chain is Ribonuclease Y (535 aa).

A helical transmembrane segment spans residues 30-50 (IWALPALVIGLAIGAGIGILI). The 61-residue stretch at 225-285 (TVSTVALPSE…VRREVARLAL (61 aa)) folds into the KH domain. The 94-residue stretch at 351–444 (VLQHSLECAL…VQAVDAISGG (94 aa)) folds into the HD domain.

The protein belongs to the RNase Y family.

It localises to the cell membrane. Endoribonuclease that initiates mRNA decay. The polypeptide is Ribonuclease Y (Roseiflexus sp. (strain RS-1)).